The primary structure comprises 83 residues: Alpha-neurotoxin NTX-3 (83 aa).

The signal sequence occupies residues 1-21 (MKTLLLTLLVVTIVCLDLGYT). Disulfide bonds link C24-C45, C38-C62, C64-C75, and C76-C81.

The protein belongs to the three-finger toxin family. Short-chain subfamily. Type I alpha-neurotoxin sub-subfamily. Expressed by the venom gland.

The protein resides in the secreted. Functionally, binds to muscle nicotinic acetylcholine receptor (nAChR) and inhibit acetylcholine from binding to the receptor, thereby impairing neuromuscular transmission. This is Alpha-neurotoxin NTX-3 from Naja sputatrix (Malayan spitting cobra).